The chain runs to 335 residues: UPF0353 protein BCG_1543 (335 aa).

Helical transmembrane passes span 18 to 38 (WFFL…LMQL) and 67 to 87 (VPAI…AGPT). Positions 98–294 (VVMLVIDVSQ…AELRAVYSSL (197 aa)) constitute a VWFA domain. A helical transmembrane segment spans residues 309–329 (VGWLRLGALALALAALAALLI).

This sequence belongs to the UPF0353 family.

It is found in the cell membrane. In Mycobacterium bovis (strain BCG / Pasteur 1173P2), this protein is UPF0353 protein BCG_1543.